A 312-amino-acid chain; its full sequence is Glyceraldehyde-3-phosphate dehydrogenase, cytosolic (312 aa).

Residues 5–6 (RI) and D27 each bind NAD(+). Residues 144–146 (SCT), T175, 204–205 (TG), and R227 contribute to the D-glyceraldehyde 3-phosphate site. Catalysis depends on C145, which acts as the Nucleophile. N309 is a binding site for NAD(+).

This sequence belongs to the glyceraldehyde-3-phosphate dehydrogenase family. As to quaternary structure, homotetramer.

The protein localises to the cytoplasm. It carries out the reaction D-glyceraldehyde 3-phosphate + phosphate + NAD(+) = (2R)-3-phospho-glyceroyl phosphate + NADH + H(+). The protein operates within carbohydrate degradation; glycolysis; pyruvate from D-glyceraldehyde 3-phosphate: step 1/5. In terms of biological role, key enzyme in glycolysis that catalyzes the first step of the pathway by converting D-glyceraldehyde 3-phosphate (G3P) into 3-phospho-D-glyceroyl phosphate. Essential for the maintenance of cellular ATP levels and carbohydrate metabolism. The protein is Glyceraldehyde-3-phosphate dehydrogenase, cytosolic (GapC) of Scenedesmus vacuolatus (Green alga).